Consider the following 80-residue polypeptide: DNA-binding protein HU-like (80 aa).

This sequence belongs to the bacterial histone-like protein family.

In terms of biological role, histone-like DNA-binding protein which is capable of wrapping DNA to stabilize it, and thus to prevent its denaturation under extreme environmental conditions. The polypeptide is DNA-binding protein HU-like (Rickettsia conorii (strain ATCC VR-613 / Malish 7)).